Here is a 119-residue protein sequence, read N- to C-terminus: Beta-2-microglobulin (119 aa).

The N-terminal stretch at 1–20 is a signal peptide; it reads MACSVVVALLALLSLSGLEA. The Ig-like C1-type domain occupies 25-114; sequence PKIQVYSRHP…VTFSTPKTVK (90 aa). A disulfide bridge connects residues Cys-45 and Cys-100.

This sequence belongs to the beta-2-microglobulin family. Heterodimer of an alpha chain and a beta chain. Beta-2-microglobulin is the beta-chain of major histocompatibility complex class I molecules.

It is found in the secreted. Functionally, component of the class I major histocompatibility complex (MHC). Involved in the presentation of peptide antigens to the immune system. The polypeptide is Beta-2-microglobulin (B2M) (Mico emiliae (Emilia's marmoset)).